The following is a 149-amino-acid chain: Small ribosomal subunit protein uS15 (149 aa).

Over residues 1–11 (MARMHSRDRGK) the composition is skewed to basic and acidic residues. The disordered stretch occupies residues 1–25 (MARMHSRDRGKSGSTRPPRVAPPSW).

It belongs to the universal ribosomal protein uS15 family. In terms of assembly, part of the 30S ribosomal subunit.

The chain is Small ribosomal subunit protein uS15 from Methanopyrus kandleri (strain AV19 / DSM 6324 / JCM 9639 / NBRC 100938).